The chain runs to 235 residues: Rab-like protein 3 (235 aa).

Positions methionine 1–aspartate 235 are small GTPase-like. Residues glycine 16–serine 21, lysine 148–aspartate 150, and aspartate 179–cysteine 180 contribute to the GTP site.

Belongs to the small GTPase superfamily. Rab family. Homodimer.

Functionally, required for KRAS signaling regulation and modulation of cell proliferation. Regulator of KRAS prenylation, and probably prenylation of other small GTPases. Required for lymphocyte development and function. Not required for myeloid cell development. This is Rab-like protein 3 (rabl3) from Xenopus laevis (African clawed frog).